Reading from the N-terminus, the 470-residue chain is Iron-sulfur cluster assembly SufBD family protein ABCI9 (470 aa).

The protein belongs to the iron-sulfur cluster assembly SufBD family.

The sequence is that of Iron-sulfur cluster assembly SufBD family protein ABCI9 (ABCI9) from Arabidopsis thaliana (Mouse-ear cress).